Here is a 415-residue protein sequence, read N- to C-terminus: 3-oxoacyl-[acyl-carrier-protein] synthase 2 (415 aa).

The region spanning 3–412 (KRRVVVTGMG…GTNGSLVFKK (410 aa)) is the Ketosynthase family 3 (KS3) domain. Catalysis depends on for beta-ketoacyl synthase activity residues Cys-164, His-304, and His-342.

It belongs to the thiolase-like superfamily. Beta-ketoacyl-ACP synthases family. Homodimer.

It catalyses the reaction a fatty acyl-[ACP] + malonyl-[ACP] + H(+) = a 3-oxoacyl-[ACP] + holo-[ACP] + CO2. It carries out the reaction (9Z)-hexadecenoyl-[ACP] + malonyl-[ACP] + H(+) = 3-oxo-(11Z)-octadecenoyl-[ACP] + holo-[ACP] + CO2. It functions in the pathway lipid metabolism; fatty acid biosynthesis. Functionally, involved in the type II fatty acid elongation cycle. Catalyzes the elongation of a wide range of acyl-ACP by the addition of two carbons from malonyl-ACP to an acyl acceptor. Can efficiently catalyze the conversion of palmitoleoyl-ACP (cis-hexadec-9-enoyl-ACP) to cis-vaccenoyl-ACP (cis-octadec-11-enoyl-ACP), an essential step in the thermal regulation of fatty acid composition. This Vibrio harveyi (Beneckea harveyi) protein is 3-oxoacyl-[acyl-carrier-protein] synthase 2 (fabF).